Reading from the N-terminus, the 130-residue chain is Small ribosomal subunit protein bS6 (130 aa).

Residues 99–130 (ASPMVKAKDERRERHDFASEANDDSEAGDSEE) are disordered. The span at 104-116 (KAKDERRERHDFA) shows a compositional bias: basic and acidic residues. A compositionally biased stretch (acidic residues) spans 119–130 (ANDDSEAGDSEE).

The protein belongs to the bacterial ribosomal protein bS6 family.

Its function is as follows. Binds together with bS18 to 16S ribosomal RNA. This chain is Small ribosomal subunit protein bS6, found in Yersinia enterocolitica serotype O:8 / biotype 1B (strain NCTC 13174 / 8081).